An 86-amino-acid polypeptide reads, in one-letter code: MNLRKILLSSALSLGMLVSAAPVLATSSSSEVIVKSDEYDYDTIYQLSPLPNFKPSIEYNGYTYTLTRYYFDYSIQFYTAIYTKVV.

An N-terminal signal peptide occupies residues 1–25 (MNLRKILLSSALSLGMLVSAAPVLA).

This is an uncharacterized protein from Bacillus subtilis (strain 168).